An 883-amino-acid polypeptide reads, in one-letter code: Probable pre-mRNA-splicing factor ATP-dependent RNA helicase DEAH8 (883 aa).

Residues 232–395 enclose the Helicase ATP-binding domain; the sequence is LKLIEENQVL…FDSARIYLIP (164 aa). 245–252 contributes to the ATP binding site; that stretch reads GETGSGKT. Positions 342-345 match the DEAH box motif; that stretch reads DEAH. Residues 416 to 589 enclose the Helicase C-terminal domain; it reads TVIRTVVQIH…SVVLTLKSLG (174 aa). Residues 845 to 883 form a disordered region; that stretch reads EDTRPKKTQRRIEEASTSKVDTNKKTRTSKVDTNKKSKR.

It belongs to the DEAD box helicase family. DEAH subfamily. PRP2 sub-subfamily. In terms of tissue distribution, predominantly expressed in flowers.

It catalyses the reaction ATP + H2O = ADP + phosphate + H(+). Its function is as follows. May be involved in pre-mRNA splicing. The chain is Probable pre-mRNA-splicing factor ATP-dependent RNA helicase DEAH8 from Arabidopsis thaliana (Mouse-ear cress).